Consider the following 85-residue polypeptide: Putative membrane protein insertion efficiency factor (85 aa).

The interval 62–85 (KGGFDPVPLKKDKSASKHSHKHNH) is disordered.

Belongs to the UPF0161 family.

The protein resides in the cell membrane. In terms of biological role, could be involved in insertion of integral membrane proteins into the membrane. This chain is Putative membrane protein insertion efficiency factor, found in Staphylococcus aureus (strain Mu3 / ATCC 700698).